Reading from the N-terminus, the 88-residue chain is Small ribosomal subunit protein uS15 (88 aa).

It belongs to the universal ribosomal protein uS15 family. Part of the 30S ribosomal subunit. Forms a bridge to the 50S subunit in the 70S ribosome, contacting the 23S rRNA.

In terms of biological role, one of the primary rRNA binding proteins, it binds directly to 16S rRNA where it helps nucleate assembly of the platform of the 30S subunit by binding and bridging several RNA helices of the 16S rRNA. Functionally, forms an intersubunit bridge (bridge B4) with the 23S rRNA of the 50S subunit in the ribosome. The sequence is that of Small ribosomal subunit protein uS15 from Desulfitobacterium hafniense (strain Y51).